The following is a 276-amino-acid chain: Aspartate dehydrogenase domain-containing protein (276 aa).

It belongs to the L-aspartate dehydrogenase family.

The protein is Aspartate dehydrogenase domain-containing protein (aspdh) of Danio rerio (Zebrafish).